The chain runs to 408 residues: Acetate kinase (408 aa).

Asn7 serves as a coordination point for Mg(2+). Residue Lys14 coordinates ATP. Arg91 provides a ligand contact to substrate. The Proton donor/acceptor role is filled by Asp148. ATP-binding positions include 208–212, 283–285, and 331–335; these read HLGNG, DFR, and GIGEN. Glu384 contributes to the Mg(2+) binding site.

Belongs to the acetokinase family. In terms of assembly, homodimer. The cofactor is Mg(2+). Mn(2+) is required as a cofactor.

The protein localises to the cytoplasm. It catalyses the reaction acetate + ATP = acetyl phosphate + ADP. The protein operates within metabolic intermediate biosynthesis; acetyl-CoA biosynthesis; acetyl-CoA from acetate: step 1/2. In terms of biological role, catalyzes the formation of acetyl phosphate from acetate and ATP. Can also catalyze the reverse reaction. The chain is Acetate kinase from Methanosarcina acetivorans (strain ATCC 35395 / DSM 2834 / JCM 12185 / C2A).